Consider the following 384-residue polypeptide: S-adenosylmethionine synthase (384 aa).

Histidine 15 contacts ATP. Position 17 (aspartate 17) interacts with Mg(2+). A K(+)-binding site is contributed by glutamate 43. Positions 56 and 99 each coordinate L-methionine. Positions 99–109 (QSPDINQGVDR) are flexible loop. ATP contacts are provided by residues 164-166 (DAK), 230-231 (RF), aspartate 239, 245-246 (RK), alanine 262, and lysine 266. L-methionine is bound at residue aspartate 239. An L-methionine-binding site is contributed by lysine 270.

This sequence belongs to the AdoMet synthase family. As to quaternary structure, homotetramer; dimer of dimers. Mg(2+) is required as a cofactor. Requires K(+) as cofactor.

It is found in the cytoplasm. The enzyme catalyses L-methionine + ATP + H2O = S-adenosyl-L-methionine + phosphate + diphosphate. Its pathway is amino-acid biosynthesis; S-adenosyl-L-methionine biosynthesis; S-adenosyl-L-methionine from L-methionine: step 1/1. Functionally, catalyzes the formation of S-adenosylmethionine (AdoMet) from methionine and ATP. The overall synthetic reaction is composed of two sequential steps, AdoMet formation and the subsequent tripolyphosphate hydrolysis which occurs prior to release of AdoMet from the enzyme. The polypeptide is S-adenosylmethionine synthase (Erwinia tasmaniensis (strain DSM 17950 / CFBP 7177 / CIP 109463 / NCPPB 4357 / Et1/99)).